Here is a 206-residue protein sequence, read N- to C-terminus: MGRTLVLIRHGQSEWNLKNLFTGWKDPDLTEKGHAEAIAAGKKLKETGVKFDIAYTSALQRAQKTAQHILEQMGQSDLEMIKSAALNERNYGDLSGLNKDEVRQQWGEEQVKMWRRSYTIAPPNGESLRDTGARIWPYYLYHIQPHILRSQTVLIAAHGNSLRALMMALEGLNGEEIISQELATGIPIIYTFNPDSTISSKTIITP.

Substrate-binding positions include 9-16 (RHGQSEWN), 22-23 (TG), Arg-61, 88-91 (ERNY), Lys-99, 115-116 (RR), and 159-160 (GN). Catalysis depends on His-10, which acts as the Tele-phosphohistidine intermediate. The active-site Proton donor/acceptor is the Glu-88.

Belongs to the phosphoglycerate mutase family. BPG-dependent PGAM subfamily. Homodimer.

The enzyme catalyses (2R)-2-phosphoglycerate = (2R)-3-phosphoglycerate. The protein operates within carbohydrate degradation; glycolysis; pyruvate from D-glyceraldehyde 3-phosphate: step 3/5. Catalyzes the interconversion of 2-phosphoglycerate and 3-phosphoglycerate. In Bartonella tribocorum (strain CIP 105476 / IBS 506), this protein is 2,3-bisphosphoglycerate-dependent phosphoglycerate mutase.